A 448-amino-acid chain; its full sequence is Glutamyl-tRNA reductase (448 aa).

Substrate is bound by residues 49 to 52 (TCNR), Ser109, 114 to 116 (ETQ), and Gln120. Catalysis depends on Cys50, which acts as the Nucleophile. 189–194 (GAGEMS) lines the NADP(+) pocket.

The protein belongs to the glutamyl-tRNA reductase family. Homodimer.

It catalyses the reaction (S)-4-amino-5-oxopentanoate + tRNA(Glu) + NADP(+) = L-glutamyl-tRNA(Glu) + NADPH + H(+). Its pathway is porphyrin-containing compound metabolism; protoporphyrin-IX biosynthesis; 5-aminolevulinate from L-glutamyl-tRNA(Glu): step 1/2. Functionally, catalyzes the NADPH-dependent reduction of glutamyl-tRNA(Glu) to glutamate 1-semialdehyde (GSA). This Staphylococcus aureus (strain Mu3 / ATCC 700698) protein is Glutamyl-tRNA reductase.